The sequence spans 251 residues: Octanoyltransferase (251 aa).

Positions 56 to 237 (ADTGDEIWVV…RLIANLDGES (182 aa)) constitute a BPL/LPL catalytic domain. Residues 96-103 (RGGQITYH), 168-170 (ALG), and 181-183 (GLS) contribute to the substrate site. Catalysis depends on cysteine 199, which acts as the Acyl-thioester intermediate.

This sequence belongs to the LipB family.

The protein localises to the cytoplasm. The catalysed reaction is octanoyl-[ACP] + L-lysyl-[protein] = N(6)-octanoyl-L-lysyl-[protein] + holo-[ACP] + H(+). It participates in protein modification; protein lipoylation via endogenous pathway; protein N(6)-(lipoyl)lysine from octanoyl-[acyl-carrier-protein]: step 1/2. Its function is as follows. Catalyzes the transfer of endogenously produced octanoic acid from octanoyl-acyl-carrier-protein onto the lipoyl domains of lipoate-dependent enzymes. Lipoyl-ACP can also act as a substrate although octanoyl-ACP is likely to be the physiological substrate. This is Octanoyltransferase from Burkholderia ambifaria (strain MC40-6).